The following is a 308-amino-acid chain: Taste receptor type 2 member 107 (308 aa).

The Extracellular portion of the chain corresponds to 1–7 (MLNSAEG). Residues 8 to 28 (ILLCVVTSEAVLGVLGDTYIA) traverse the membrane as a helical segment. Over 29-43 (LFNCMDYAKNKKLSK) the chain is Cytoplasmic. Residues 44–64 (IGFILIGLAISRIGVVWIIIL) traverse the membrane as a helical segment. The Extracellular segment spans residues 65 to 87 (QGYIQVFFPHMLTSGNITEYITY). An N-linked (GlcNAc...) asparagine glycan is attached at Asn-80. Residues 88-108 (IWVFLNHLSVWFVTNLNILYF) traverse the membrane as a helical segment. The Cytoplasmic portion of the chain corresponds to 109 to 125 (LKIANFSNSVFLWLKRR). The helical transmembrane segment at 126–146 (VNAVFIFLSGCLLTSWLLCFP) threads the bilayer. The Extracellular segment spans residues 147–180 (QMTKILQNSKMHQRNTSWVHQRKNYFLINQSVTN). Asn-161 and Asn-175 each carry an N-linked (GlcNAc...) asparagine glycan. A helical membrane pass occupies residues 181-201 (LGIFFFIIVSLITCFLLIVFL). Residues 202 to 232 (WRHVRQMHSDVSGFRDHSTKVHVKAMKFLIS) lie on the Cytoplasmic side of the membrane. Residues 233-253 (FMVFFILHFVGLSIEVLCFIL) form a helical membrane-spanning segment. The Extracellular segment spans residues 254-258 (PQNKL). Residues 259–279 (LFITGLTATCLYPCGHSIIVI) form a helical membrane-spanning segment. Over 280–308 (LGNKQLKQASLKALQQLKCCETKGNFRVK) the chain is Cytoplasmic.

The protein belongs to the G-protein coupled receptor T2R family.

Its subcellular location is the membrane. Its function is as follows. Putative taste receptor which may play a role in the perception of bitterness. The chain is Taste receptor type 2 member 107 from Mus musculus (Mouse).